We begin with the raw amino-acid sequence, 279 residues long: Energy-coupling factor transporter ATP-binding protein EcfA1 (279 aa).

The ABC transporter domain occupies 5-240; the sequence is ITVNNLFFKY…GNRLISLGLD (236 aa). An ATP-binding site is contributed by 40–47; it reads GHNGSGKS.

It belongs to the ABC transporter superfamily. Energy-coupling factor EcfA family. As to quaternary structure, forms a stable energy-coupling factor (ECF) transporter complex composed of 2 membrane-embedded substrate-binding proteins (S component), 2 ATP-binding proteins (A component) and 2 transmembrane proteins (T component).

It is found in the cell membrane. In terms of biological role, ATP-binding (A) component of a common energy-coupling factor (ECF) ABC-transporter complex. Unlike classic ABC transporters this ECF transporter provides the energy necessary to transport a number of different substrates. In Streptococcus agalactiae serotype Ia (strain ATCC 27591 / A909 / CDC SS700), this protein is Energy-coupling factor transporter ATP-binding protein EcfA1.